The primary structure comprises 330 residues: PTS system mannose-specific EIIAB component (330 aa).

The region spanning Gly-2–Ile-130 is the PTS EIIA type-4 domain. The active-site Tele-phosphohistidine intermediate; for EIIA activity is His-10. Position 10 is a phosphohistidine; by HPr (His-10). A hinge region spans residues Thr-143 to Thr-161. The region spanning Gly-166 to Lys-330 is the PTS EIIB type-4 domain. The active-site Pros-phosphohistidine intermediate; for EIIB activity is His-181. His-181 is subject to Phosphohistidine; by EIIA.

In terms of assembly, homodimer.

It localises to the cytoplasm. The protein localises to the cell membrane. The enzyme catalyses D-mannose(out) + N(pros)-phospho-L-histidyl-[protein] = D-mannose 6-phosphate(in) + L-histidyl-[protein]. Its function is as follows. The phosphoenolpyruvate-dependent sugar phosphotransferase system (sugar PTS), a major carbohydrate active transport system, catalyzes the phosphorylation of incoming sugar substrates concomitantly with their translocation across the cell membrane. The enzyme II ManXYZ PTS system is involved in mannose transport. The polypeptide is PTS system mannose-specific EIIAB component (Streptococcus pyogenes serotype M6 (strain ATCC BAA-946 / MGAS10394)).